A 336-amino-acid polypeptide reads, in one-letter code: Large ribosomal subunit protein uL10 (336 aa).

Residues L292–G336 form a disordered region. Positions E307–A327 are enriched in acidic residues.

The protein belongs to the universal ribosomal protein uL10 family. As to quaternary structure, part of the 50S ribosomal subunit. Forms part of the ribosomal stalk which helps the ribosome interact with GTP-bound translation factors. Forms a heptameric L10(L12)2(L12)2(L12)2 complex, where L10 forms an elongated spine to which the L12 dimers bind in a sequential fashion.

In terms of biological role, forms part of the ribosomal stalk, playing a central role in the interaction of the ribosome with GTP-bound translation factors. The chain is Large ribosomal subunit protein uL10 from Methanothermobacter thermautotrophicus (strain ATCC 29096 / DSM 1053 / JCM 10044 / NBRC 100330 / Delta H) (Methanobacterium thermoautotrophicum).